Here is a 264-residue protein sequence, read N- to C-terminus: Thymidylate synthase (264 aa).

Arg-21 provides a ligand contact to dUMP. His-51 serves as a coordination point for (6R)-5,10-methylene-5,6,7,8-tetrahydrofolate. Residue 126-127 (RR) participates in dUMP binding. Cys-146 functions as the Nucleophile in the catalytic mechanism. Residues 166-169 (RSAD), Asn-177, and 207-209 (HLY) contribute to the dUMP site. Position 169 (Asp-169) interacts with (6R)-5,10-methylene-5,6,7,8-tetrahydrofolate. Residue Ala-263 participates in (6R)-5,10-methylene-5,6,7,8-tetrahydrofolate binding.

It belongs to the thymidylate synthase family. Bacterial-type ThyA subfamily. As to quaternary structure, homodimer.

The protein resides in the cytoplasm. The catalysed reaction is dUMP + (6R)-5,10-methylene-5,6,7,8-tetrahydrofolate = 7,8-dihydrofolate + dTMP. The protein operates within pyrimidine metabolism; dTTP biosynthesis. Catalyzes the reductive methylation of 2'-deoxyuridine-5'-monophosphate (dUMP) to 2'-deoxythymidine-5'-monophosphate (dTMP) while utilizing 5,10-methylenetetrahydrofolate (mTHF) as the methyl donor and reductant in the reaction, yielding dihydrofolate (DHF) as a by-product. This enzymatic reaction provides an intracellular de novo source of dTMP, an essential precursor for DNA biosynthesis. The polypeptide is Thymidylate synthase (Nitrosomonas eutropha (strain DSM 101675 / C91 / Nm57)).